The primary structure comprises 461 residues: tRNA modification GTPase MnmE (461 aa).

Residues lysine 32, glutamate 89, and lysine 128 each contribute to the (6S)-5-formyl-5,6,7,8-tetrahydrofolate site. Residues 224–387 (GHALSIVGKP…LSQKISAFFP (164 aa)) form the TrmE-type G domain. Residue asparagine 234 participates in K(+) binding. GTP-binding positions include 234-239 (NAGKSS), 253-259 (SDIKGTT), and 278-281 (DTAG). Serine 238 lines the Mg(2+) pocket. The K(+) site is built by serine 253, isoleucine 255, and threonine 258. Threonine 259 provides a ligand contact to Mg(2+). Lysine 461 is a binding site for (6S)-5-formyl-5,6,7,8-tetrahydrofolate.

This sequence belongs to the TRAFAC class TrmE-Era-EngA-EngB-Septin-like GTPase superfamily. TrmE GTPase family. As to quaternary structure, homodimer. Heterotetramer of two MnmE and two MnmG subunits. Requires K(+) as cofactor.

The protein localises to the cytoplasm. Functionally, exhibits a very high intrinsic GTPase hydrolysis rate. Involved in the addition of a carboxymethylaminomethyl (cmnm) group at the wobble position (U34) of certain tRNAs, forming tRNA-cmnm(5)s(2)U34. This is tRNA modification GTPase MnmE from Helicobacter pylori (strain ATCC 700392 / 26695) (Campylobacter pylori).